The sequence spans 255 residues: 5'-nucleotidase SurE (255 aa).

A divalent metal cation-binding residues include Asp-8, Asp-9, Ser-40, and Asn-92.

This sequence belongs to the SurE nucleotidase family. A divalent metal cation serves as cofactor.

It is found in the cytoplasm. The enzyme catalyses a ribonucleoside 5'-phosphate + H2O = a ribonucleoside + phosphate. Functionally, nucleotidase that shows phosphatase activity on nucleoside 5'-monophosphates. This Brucella canis (strain ATCC 23365 / NCTC 10854 / RM-666) protein is 5'-nucleotidase SurE.